Consider the following 682-residue polypeptide: Potassium-transporting ATPase ATP-binding subunit (682 aa).

4 consecutive transmembrane segments (helical) span residues proline 34 to alanine 54, alanine 62 to alanine 82, isoleucine 219 to leucine 239, and valine 254 to isoleucine 274. Aspartate 307 functions as the 4-aspartylphosphate intermediate in the catalytic mechanism. ATP-binding positions include aspartate 344, glutamate 348, phenylalanine 377–serine 384, and lysine 395. Residues aspartate 518 and aspartate 522 each coordinate Mg(2+). The next 3 membrane-spanning stretches (helical) occupy residues phenylalanine 588–methionine 608, alanine 616–leucine 636, and isoleucine 656–leucine 676.

It belongs to the cation transport ATPase (P-type) (TC 3.A.3) family. Type IA subfamily. In terms of assembly, the system is composed of three essential subunits: KdpA, KdpB and KdpC.

It localises to the cell inner membrane. It catalyses the reaction K(+)(out) + ATP + H2O = K(+)(in) + ADP + phosphate + H(+). In terms of biological role, part of the high-affinity ATP-driven potassium transport (or Kdp) system, which catalyzes the hydrolysis of ATP coupled with the electrogenic transport of potassium into the cytoplasm. This subunit is responsible for energy coupling to the transport system and for the release of the potassium ions to the cytoplasm. The protein is Potassium-transporting ATPase ATP-binding subunit of Shigella sonnei (strain Ss046).